Consider the following 92-residue polypeptide: Small ribosomal subunit protein uS19c (92 aa).

This sequence belongs to the universal ribosomal protein uS19 family.

Its subcellular location is the plastid. The protein localises to the chloroplast. In terms of biological role, protein S19 forms a complex with S13 that binds strongly to the 16S ribosomal RNA. The sequence is that of Small ribosomal subunit protein uS19c from Ostreococcus tauri.